A 562-amino-acid polypeptide reads, in one-letter code: Probable ganciclovir kinase (562 aa).

Over residues methionine 1–isoleucine 16 the composition is skewed to polar residues. Residues methionine 1–glycine 32 form a disordered region. Residues leucine 201–valine 209 and lysine 218 each bind ATP. Aspartate 313 (proton acceptor) is an active-site residue.

It belongs to the protein kinase superfamily. Tyr protein kinase family. HCMV ganciclovir subfamily.

Its function is as follows. Phosphorylates the antiviral nucleoside analog ganciclovir. The protein is Probable ganciclovir kinase (U69) of Homo sapiens (Human).